The sequence spans 362 residues: Caveolae-associated protein 4 (362 aa).

The tract at residues 1 to 24 (MEHNGSASNAGKIHQNRLSSVTED) is disordered. Positions 100–120 (IKDVKARVEKQQVRVTKVETK) form a coiled coil. A phosphoserine mark is found at Ser-152, Ser-171, and Ser-172. The segment covering 227 to 255 (PERRERLRQSGERLRQSGERLRQSGERFK) has biased composition (basic and acidic residues). A disordered region spans residues 227–261 (PERRERLRQSGERLRQSGERLRQSGERFKKSISNA). Residue Tyr-324 is modified to Phosphotyrosine. Thr-334 carries the post-translational modification Phosphothreonine. A Phosphoserine modification is found at Ser-353.

It belongs to the CAVIN family. In terms of assembly, component of the CAVIN complex composed of CAVIN1, CAVIN2, CAVIN3 and CAVIN4. Interacts with CAVIN1, CAV3, ADRA1A and ADRA1B. Interacts with CAVIN2; this augments the transactivation of NPPA. Interacts with MAPK1 and MAPK3. In terms of tissue distribution, expressed at much higher levels in cardiomyocytes than in non-cardiomyocytes.

It localises to the cytoplasm. It is found in the myofibril. Its subcellular location is the sarcomere. The protein localises to the cytosol. The protein resides in the cell membrane. It localises to the sarcolemma. It is found in the membrane. Its subcellular location is the caveola. In terms of biological role, modulates the morphology of formed caveolae in cardiomyocytes, but is not required for caveolar formation. Facilitates the recruitment of MAPK1/3 to caveolae within cardiomyocytes and regulates alpha-1 adrenergic receptor-induced hypertrophic responses in cardiomyocytes through MAPK1/3 activation. Contributes to proper membrane localization and stabilization of caveolin-3 (CAV3) in cardiomyocytes. Induces RHOA activation and activates NPPA transcription and myofibrillar organization through the Rho/ROCK signaling pathway. This is Caveolae-associated protein 4 from Rattus norvegicus (Rat).